The chain runs to 251 residues: Endoglucanase CX (251 aa).

The protein belongs to the glycosyl hydrolase 9 (cellulase E) family.

It catalyses the reaction Endohydrolysis of (1-&gt;4)-beta-D-glucosidic linkages in cellulose, lichenin and cereal beta-D-glucans.. Functionally, degrades carboxymethylcellulose (CMC). The chain is Endoglucanase CX from Prunus persica (Peach).